A 210-amino-acid polypeptide reads, in one-letter code: High mobility group protein B2 (210 aa).

An N6-acetyllysine modification is found at Lys3. Residues 9-79 (PRGKMSSYAF…RYDREMKNYV (71 aa)) constitute a DNA-binding region (HMG box 1). Position 23 is a cysteine sulfonic acid (-SO3H); alternate (Cys23). A disulfide bond links Cys23 and Cys45. At Lys30 the chain carries N6-acetyllysine. Ser35 carries the phosphoserine modification. Position 43 is an N6-acetyllysine (Lys43). The residue at position 45 (Cys45) is a Cysteine sulfonic acid (-SO3H); alternate. Residues 51 to 76 (TMSAKEKSKFEDLAKSDKARYDREMK) are compositionally biased toward basic and acidic residues. A disordered region spans residues 51 to 102 (TMSAKEKSKFEDLAKSDKARYDREMKNYVPPKGDKKGKKKDPNAPKRPPSAF). Position 90 is an N6-acetyllysine (Lys90). Residues 95–163 (PKRPPSAFFL…KYEKDIAAYR (69 aa)) constitute a DNA-binding region (HMG box 2). Ser100 carries the phosphoserine modification. Cys106 carries the cysteine sulfonic acid (-SO3H) modification. Lys114 and Lys141 each carry N6-acetyllysine. Residues 162-172 (YRAKGKSEVGK) are compositionally biased toward basic and acidic residues. The segment at 162–210 (YRAKGKSEVGKKGPGRPTGSKKKNEPEDEEEEEEEEDDEDEEEEDEDEE) is disordered. The required for chemotactic activity stretch occupies residues 165 to 180 (KGKSEVGKKGPGRPTG). Acidic residues predominate over residues 187 to 210 (PEDEEEEEEEEDDEDEEEEDEDEE).

This sequence belongs to the HMGB family. As to quaternary structure, interacts with POU2F2, POU2F1 and POU3F1. Component of the RAG complex composed of core components RAG1 and RAG2, and associated component HMGB1 or HMGB2. Component of the SET complex, composed of at least ANP32A, APEX1, HMGB2, NME1, SET and TREX1. Directly interacts with SET. Interacts with LEF1. In terms of processing, reduction/oxidation of cysteine residues Cys-23, Cys-45 and Cys-106 and a possible intramolecular disulfide bond involving Cys-23 and Cys-45 give rise to different redox forms with specific functional activities in various cellular compartments: 1- fully reduced HMGB2 (HMGB2C23hC45hC106h), 2- disulfide HMGB2 (HMGB2C23-C45C106h) and 3- sulfonyl HMGB2 (HMGB2C23soC45soC106so).

The protein localises to the nucleus. It localises to the chromosome. The protein resides in the cytoplasm. Its subcellular location is the secreted. Its function is as follows. Multifunctional protein with various roles in different cellular compartments. May act in a redox sensitive manner. In the nucleus is an abundant chromatin-associated non-histone protein involved in transcription, chromatin remodeling and V(D)J recombination and probably other processes. Binds DNA with a preference to non-canonical DNA structures such as single-stranded DNA. Can bent DNA and enhance DNA flexibility by looping thus providing a mechanism to promote activities on various gene promoters by enhancing transcription factor binding and/or bringing distant regulatory sequences into close proximity. Involved in V(D)J recombination by acting as a cofactor of the RAG complex: acts by stimulating cleavage and RAG protein binding at the 23 bp spacer of conserved recombination signal sequences (RSS). Proposed to be involved in the innate immune response to nucleic acids by acting as a cytoplasmic promiscuous immunogenic DNA/RNA sensor which cooperates with subsequent discriminative sensing by specific pattern recognition receptors. In the extracellular compartment acts as a chemokine. Promotes proliferation and migration of endothelial cells implicating AGER/RAGE. Has antimicrobial activity in gastrointestinal epithelial tissues. Involved in inflammatory response to antigenic stimulus coupled with pro-inflammatory activity. May play a role in germ cell differentiation. Involved in modulation of neurogenesis probably by regulation of neural stem proliferation. Involved in articular cartilage surface maintenance implicating LEF1 and the Wnt/beta-catenin pathway. This is High mobility group protein B2 (Hmgb2) from Rattus norvegicus (Rat).